The chain runs to 116 residues: Large ribosomal subunit protein bL17 (116 aa).

It belongs to the bacterial ribosomal protein bL17 family. Part of the 50S ribosomal subunit. Contacts protein L32.

The sequence is that of Large ribosomal subunit protein bL17 from Aliarcobacter butzleri (strain RM4018) (Arcobacter butzleri).